A 284-amino-acid polypeptide reads, in one-letter code: Flavin-dependent thymidylate synthase (284 aa).

A ThyX domain is found at 27 to 237; it reads GFIRVVDYMG…PLAYNAFVEY (211 aa). Residues threonine 73, 96–98, and glutamate 104 contribute to the FAD site; that span reads RHR. DUMP contacts are provided by residues 93-96 and 104-108; these read QWIR and EYSAR. A ThyX motif motif is present at residues 96–106; it reads RHRTANVNEYS. Residues 122-142 are disordered; that stretch reads EQVAKQSDNNKQGSGEAFDPD. The segment covering 125-134 has biased composition (polar residues); it reads AKQSDNNKQG. DUMP is bound at residue arginine 176. FAD is bound by residues 192–194 and histidine 198; that span reads DLH. Arginine 203 contributes to the dUMP binding site. Arginine 203 serves as the catalytic Involved in ionization of N3 of dUMP, leading to its activation.

The protein belongs to the thymidylate synthase ThyX family. In terms of assembly, homotetramer. Requires FAD as cofactor.

It carries out the reaction dUMP + (6R)-5,10-methylene-5,6,7,8-tetrahydrofolate + NADPH + H(+) = dTMP + (6S)-5,6,7,8-tetrahydrofolate + NADP(+). It participates in pyrimidine metabolism; dTTP biosynthesis. Catalyzes the reductive methylation of 2'-deoxyuridine-5'-monophosphate (dUMP) to 2'-deoxythymidine-5'-monophosphate (dTMP) while utilizing 5,10-methylenetetrahydrofolate (mTHF) as the methyl donor, and NADPH and FADH(2) as the reductant. The chain is Flavin-dependent thymidylate synthase from Wolbachia pipientis wMel.